A 131-amino-acid chain; its full sequence is Olfactory receptor-like protein COR9 (131 aa).

Residues 1 to 16 (VAICSPLLYSTVMTKR) are Cytoplasmic-facing. Residues 17-41 (VCMQLVVGSYMGGLLNSLTHTCGLL) form a helical membrane-spanning segment. Residues 42 to 82 (GLPFCGPNVINHYFCDIPPLLQLACSDTHRNETLLLAFSAV) are Extracellular-facing. A glycan (N-linked (GlcNAc...) asparagine) is linked at Asn-72. A helical transmembrane segment spans residues 83-103 (IALFTLFVITASYMLILSVIL). The Cytoplasmic portion of the chain corresponds to 104-116 (KIQSDDGRKKTFH). A helical transmembrane segment spans residues 117–131 (TCASHLTAITIFFGS).

It belongs to the G-protein coupled receptor 1 family.

The protein localises to the cell membrane. Its function is as follows. Odorant receptor. The chain is Olfactory receptor-like protein COR9 (COR9) from Gallus gallus (Chicken).